Here is a 275-residue protein sequence, read N- to C-terminus: 3-methyl-2-oxobutanoate hydroxymethyltransferase (275 aa).

The Mg(2+) site is built by aspartate 55 and aspartate 94. Residues 55–56, aspartate 94, and lysine 122 each bind 3-methyl-2-oxobutanoate; that span reads DS. A Mg(2+)-binding site is contributed by glutamate 124. Residue glutamate 191 is the Proton acceptor of the active site.

The protein belongs to the PanB family. Homodecamer; pentamer of dimers. Mg(2+) is required as a cofactor.

The protein resides in the cytoplasm. It catalyses the reaction 3-methyl-2-oxobutanoate + (6R)-5,10-methylene-5,6,7,8-tetrahydrofolate + H2O = 2-dehydropantoate + (6S)-5,6,7,8-tetrahydrofolate. The protein operates within cofactor biosynthesis; (R)-pantothenate biosynthesis; (R)-pantoate from 3-methyl-2-oxobutanoate: step 1/2. Its function is as follows. Catalyzes the reversible reaction in which hydroxymethyl group from 5,10-methylenetetrahydrofolate is transferred onto alpha-ketoisovalerate to form ketopantoate. This chain is 3-methyl-2-oxobutanoate hydroxymethyltransferase, found in Marinomonas sp. (strain MWYL1).